Reading from the N-terminus, the 343-residue chain is Aspartate carbamoyltransferase catalytic subunit (343 aa).

Carbamoyl phosphate contacts are provided by Arg91 and Thr92. An L-aspartate-binding site is contributed by Lys119. Residues Arg141, His171, and Gln174 each coordinate carbamoyl phosphate. The L-aspartate site is built by Arg204 and Arg259. Carbamoyl phosphate is bound by residues Gly300 and Pro301.

The protein belongs to the aspartate/ornithine carbamoyltransferase superfamily. ATCase family. As to quaternary structure, heterododecamer (2C3:3R2) of six catalytic PyrB chains organized as two trimers (C3), and six regulatory PyrI chains organized as three dimers (R2).

The catalysed reaction is carbamoyl phosphate + L-aspartate = N-carbamoyl-L-aspartate + phosphate + H(+). It functions in the pathway pyrimidine metabolism; UMP biosynthesis via de novo pathway; (S)-dihydroorotate from bicarbonate: step 2/3. Functionally, catalyzes the condensation of carbamoyl phosphate and aspartate to form carbamoyl aspartate and inorganic phosphate, the committed step in the de novo pyrimidine nucleotide biosynthesis pathway. The sequence is that of Aspartate carbamoyltransferase catalytic subunit from Burkholderia cenocepacia (strain HI2424).